Consider the following 136-residue polypeptide: Holo-[acyl-carrier-protein] synthase (136 aa).

The Mg(2+) site is built by aspartate 8 and glutamate 57.

Belongs to the P-Pant transferase superfamily. AcpS family. The cofactor is Mg(2+).

The protein localises to the cytoplasm. It carries out the reaction apo-[ACP] + CoA = holo-[ACP] + adenosine 3',5'-bisphosphate + H(+). Transfers the 4'-phosphopantetheine moiety from coenzyme A to a Ser of acyl-carrier-protein. The sequence is that of Holo-[acyl-carrier-protein] synthase from Methylorubrum extorquens (strain PA1) (Methylobacterium extorquens).